Here is a 336-residue protein sequence, read N- to C-terminus: NADH-quinone oxidoreductase subunit H (336 aa).

8 helical membrane passes run 4–24, 75–95, 108–128, 154–174, 181–201, 233–253, 272–292, and 308–328; these read YILWTSLYVLLIVIPLILVVA, YLFFIAPILAFAPAYAAWAVI, LGLLYILAMTSFSIYGIVIAG, MGFAIVGVVIAAGSMGITGII, IWHWYFIPLFPLFIVYFIAGI, LFFLAEYANMILISILTSIMF, FVPGVVWLFAKTGIFMFMFLW, and LGWKIFIPLTFVWVVIVACMV.

The protein belongs to the complex I subunit 1 family. NDH-1 is composed of 14 different subunits. Subunits NuoA, H, J, K, L, M, N constitute the membrane sector of the complex.

It is found in the cell inner membrane. The enzyme catalyses a quinone + NADH + 5 H(+)(in) = a quinol + NAD(+) + 4 H(+)(out). NDH-1 shuttles electrons from NADH, via FMN and iron-sulfur (Fe-S) centers, to quinones in the respiratory chain. The immediate electron acceptor for the enzyme in this species is believed to be ubiquinone. Couples the redox reaction to proton translocation (for every two electrons transferred, four hydrogen ions are translocated across the cytoplasmic membrane), and thus conserves the redox energy in a proton gradient. This subunit may bind ubiquinone. The polypeptide is NADH-quinone oxidoreductase subunit H (Francisella tularensis subsp. tularensis (strain FSC 198)).